Reading from the N-terminus, the 353-residue chain is Rhodopsin (353 aa).

The Extracellular segment spans residues 1 to 36 (MNGTEGPFFYVPMVNTTGIVRSPYDYPQYYLVSPAA). N-linked (GlcNAc...) asparagine glycans are attached at residues N2 and N15. Residues 37–61 (YAALGAYMFLLILLGFPINFLTLYV) form a helical membrane-spanning segment. The Cytoplasmic segment spans residues 62 to 73 (TIEHKKLRTPLN). Residues 74–96 (YILLNLAVADLFMVFGGFTTTMY) form a helical membrane-spanning segment. Residues 97–110 (TSMHGYFVLGRLGC) lie on the Extracellular side of the membrane. A disulfide bridge links C110 with C187. A helical transmembrane segment spans residues 111–133 (NMEGFFATLGGEIGLWSLVVLAV). A 'Ionic lock' involved in activated form stabilization motif is present at residues 134–136 (ERW). Over 134 to 152 (ERWLVVCKPISNFRFGENH) the chain is Cytoplasmic. A helical transmembrane segment spans residues 153 to 173 (AIMGLAFTWVMACSCAVPPLV). Over 174–202 (GWSRYIPEGMQCSCGVDYYTRAEGFNNES) the chain is Extracellular. N-linked (GlcNAc...) asparagine glycosylation is present at N200. The chain crosses the membrane as a helical span at residues 203–224 (FVIYMFACHFIIPMCVVFFCYG). Topologically, residues 225-252 (RLLCAVKEAAAAQQESETTQRAEKEVTR) are cytoplasmic. The helical transmembrane segment at 253-274 (MVVIMGIAFLICWCPYASVAWY) threads the bilayer. Topologically, residues 275–286 (IFTHQGSEFGPV) are extracellular. The chain crosses the membrane as a helical span at residues 287-308 (FMTLPAFFAKTSSVYNPLIYIL). Residue K296 is modified to N6-(retinylidene)lysine. Residues 309 to 353 (MNKQFRHCMITTLCCGKNPFEEEEGASTASKTEASSVSSSSVSPA) lie on the Cytoplasmic side of the membrane. S-palmitoyl cysteine attachment occurs at residues C322 and C323. A disordered region spans residues 331–353 (EEGASTASKTEASSVSSSSVSPA). Positions 334–353 (ASTASKTEASSVSSSSVSPA) are enriched in low complexity.

The protein belongs to the G-protein coupled receptor 1 family. Opsin subfamily. In terms of processing, phosphorylated on some or all of the serine and threonine residues present in the C-terminal region. Post-translationally, contains one covalently linked retinal chromophore.

It is found in the membrane. Its subcellular location is the cell projection. It localises to the cilium. The protein resides in the photoreceptor outer segment. Its function is as follows. Photoreceptor required for image-forming vision at low light intensity. While most salt water fish species use retinal as chromophore, most freshwater fish use 3-dehydroretinal, or a mixture of retinal and 3-dehydroretinal. Light-induced isomerization of 11-cis to all-trans retinal triggers a conformational change that activates signaling via G-proteins. Subsequent receptor phosphorylation mediates displacement of the bound G-protein alpha subunit by arrestin and terminates signaling. The sequence is that of Rhodopsin (rho) from Dicentrarchus labrax (European seabass).